Consider the following 92-residue polypeptide: Phospholemman (92 aa).

The signal sequence occupies residues 1–20 (MAPLHHILVLCVGFLTTATA). Over 21–35 (EAPQEHDPFTYDYQS) the chain is Extracellular. The helical transmembrane segment at 36-56 (LRIGGLIIAGILFILGILIVL) threads the bilayer. Residues 57–92 (SRRCRCKFNQQQRTGEPDEEEGTFRSSIRRLSTRRR) lie on the Cytoplasmic side of the membrane. Cysteine 60 is lipidated: S-palmitoyl cysteine. The residue at position 62 (cysteine 62) is an S-glutathionyl cysteine; alternate. A lipid anchor (S-palmitoyl cysteine; alternate) is attached at cysteine 62. The segment at 65–92 (NQQQRTGEPDEEEGTFRSSIRRLSTRRR) is disordered. Threonine 79 carries the phosphothreonine modification. Residue serine 82 is modified to Phosphoserine. Residues serine 83 and serine 88 each carry the phosphoserine; by PKA and PKC modification. The span at 83–92 (SIRRLSTRRR) shows a compositional bias: basic residues. Threonine 89 carries the phosphothreonine; by PKC modification.

This sequence belongs to the FXYD family. Homotetramer. Monomer. Regulatory subunit of the sodium/potassium-transporting ATPase (NKA) which is composed of a catalytic alpha subunit, a non-catalytic beta subunit and an additional regulatory subunit. The monomeric form associates with NKA while the oligomeric form does not. Interacts with the catalytic alpha-1 subunit ATP1A1. Also interacts with the catalytic alpha-2 and alpha-3 subunits ATP1A2 and ATP1A3. Very little interaction with the alpha subunits ATP1A1, ATP1A2 or ATP1A3 when phosphorylated at Ser-83. Interacts with non-catalytic beta-1 subunit ATP1B1. Oxidative stress decreases interaction with ATP1A1 but increases interaction with ATP1B1. Major plasma membrane substrate for cAMP-dependent protein kinase (PKA) and protein kinase C (PKC) in several different tissues. Phosphorylated in response to insulin and adrenergic stimulation. Phosphorylation at Ser-88 stimulates sodium/potassium-transporting ATPase activity while the unphosphorylated form inhibits sodium/potassium-transporting ATPase activity. Phosphorylation increases tetramerization, decreases binding to ATP1A1 and reduces inhibition of ATP1A1 activity. Phosphorylation at Ser-83 leads to greatly reduced interaction with ATP1A1, ATP1A2 and ATP1A3. May be phosphorylated by DMPK. In terms of processing, palmitoylation increases half-life and stability and is enhanced upon phosphorylation at Ser-88 by PKA. In terms of tissue distribution, present in heart, esophagus, stomach, aorta, skeletal muscle, smooth muscle, and liver but absent from brain and kidney.

Its subcellular location is the cell membrane. It localises to the sarcolemma. It is found in the apical cell membrane. The protein resides in the membrane. The protein localises to the caveola. Its subcellular location is the T-tubule. Its function is as follows. Associates with and regulates the activity of the sodium/potassium-transporting ATPase (NKA) which transports Na(+) out of the cell and K(+) into the cell. Inhibits NKA activity in its unphosphorylated state and stimulates activity when phosphorylated. Reduces glutathionylation of the NKA beta-1 subunit ATP1B1, thus reversing glutathionylation-mediated inhibition of ATP1B1. Contributes to female sexual development by maintaining the excitability of neurons which secrete gonadotropin-releasing hormone. This is Phospholemman from Canis lupus familiaris (Dog).